The following is a 132-amino-acid chain: Small ribosomal subunit protein uS8 (132 aa).

This sequence belongs to the universal ribosomal protein uS8 family. As to quaternary structure, part of the 30S ribosomal subunit. Contacts proteins S5 and S12.

Functionally, one of the primary rRNA binding proteins, it binds directly to 16S rRNA central domain where it helps coordinate assembly of the platform of the 30S subunit. This Streptococcus mutans serotype c (strain ATCC 700610 / UA159) protein is Small ribosomal subunit protein uS8.